The following is a 1013-amino-acid chain: MAEASERLYRVEYAKSGRASCKKCSESIPKDSLRMAIMVQSPMFDGKVPHWYHFSCFWKVGHSIRQPDVEVDGFSELRWDDQQKVKKTAEAGGVAGKGQDGSGGKSEKTLGDFAAEYAKSNRSTCKGCMEKIEKGQVRLSKKMLDPEKPQLGMIDRWYHPTCFVKNREELGFRPEYSASQLKGFSLLSAEDKEVLKKQLPGVKSEGKRKGDEVDGADEVAKKKSKKGKDKDSKLEKALKAQNDLIWNIKDELKKACSTSDLKELLIFNQQQVPSGESAILDRVADGMAFGALLPCKECSGQLVFKSDAYYCTGDVTAWTKCMVKTQTPSRKEWVTPKEFREISYLKKLKVKKQDRIFPPETSAPAPPHLPPSVTSAPTAVNSSCPADKPLSNMKILTLGKLSQSKDEAKATIEKLGGKLTGSANNASLCISTKKEVEKMGKKMEEVQAANVRVVCEDFLQDVAASTKSLQELLSAHSLSSWGAEVKVEPVEVAAPKGKSAAPSKKSKGLYKEEGVNKSEKRMKLTLKGGAAVDPDSGLEHSAHVLEKGGKVFSATLGLVDIVKGTNSYYKLQLLEDDKESRYWIFRSWGRVGTVIGSNKLEQMPSKEDAVEHFMKLYEEKTGNAWHSKNFTKYPKKFYPLEIDYGQDEEAVKKLTVKPGTKSKLPKAVQELVGMIFDVESMKKALVEYEIDLQKMPLGKLSKRQIQAAYSILSEVQQAVSQGSSDSQILDLSNRFYTLIPHDFGMKKPPLLNNADSVQAKVEMLDNLLDIEVAYSLLRGGSDDSSKDPIDVNYEKLKTDIKVVDRDSEEAEVIRKYVKNTHATTHNAYDLEVMDIFKIEREGESQRYKPFKQLHNRRLLWHGSRTTNFAGILSQGLRIAPPEAPVTGYMFGKGIYFADMVSKSANYCHTSQGDPIGLILLGEVALGNMYELKHASHISKLPKGKHSVKGLGKTTPDPSASITLEGVEVPLGTGIPSGVNDTCLLYNEYIVYDIAQVNLKYLLKLKFNFKTSLW.

Alanine 2 carries the post-translational modification N-acetylalanine. A PARP-type 1 zinc finger spans residues tyrosine 9–glycine 93. Cysteine 21 and cysteine 24 together coordinate Zn(2+). Position 41 is a phosphoserine (serine 41). Zn(2+) is bound by residues histidine 53 and cysteine 56. N6-acetyllysine is present on residues lysine 97 and lysine 105. A PARP-type 2 zinc finger spans residues phenylalanine 113–lysine 203. The Zn(2+) site is built by cysteine 125 and cysteine 128. Position 131 is an N6-acetyllysine (lysine 131). Residues histidine 159 and cysteine 162 each contribute to the Zn(2+) site. Residues serine 177, serine 179, and serine 185 each carry the phosphoserine modification. A Glycyl lysine isopeptide (Lys-Gly) (interchain with G-Cter in SUMO2) cross-link involves residue lysine 192. Positions glutamine 198–lysine 233 are disordered. Lysine 203 participates in a covalent cross-link: Glycyl lysine isopeptide (Lys-Gly) (interchain with G-Cter in SUMO1); alternate. Lysine 203 is covalently cross-linked (Glycyl lysine isopeptide (Lys-Gly) (interchain with G-Cter in SUMO2); alternate). 2 short sequence motifs (nuclear localization signal) span residues lysine 207–lysine 209 and lysine 221–lysine 226. The PADR1 zinc-binding domain occupies lysine 225–proline 359. Lysine 249 participates in a covalent cross-link: Glycyl lysine isopeptide (Lys-Gly) (interchain with G-Cter in SUMO2). Residues serine 274 and serine 277 each carry the phosphoserine modification. The zinc ribbon stretch occupies residues glycine 290–glutamate 332. Zn(2+) contacts are provided by cysteine 295, cysteine 298, cysteine 311, and cysteine 321. The disordered stretch occupies residues phenylalanine 357–serine 383. A compositionally biased stretch (polar residues) spans serine 372 to serine 383. Residues valine 373–lysine 523 form an automodification domain region. The region spanning proline 385 to histidine 476 is the BRCT domain. The residue at position 387 (aspartate 387) is a PolyADP-ribosyl aspartic acid. A polyADP-ribosyl glutamic acid mark is found at glutamate 407, glutamate 413, glutamate 435, glutamate 437, glutamate 444, glutamate 445, and glutamate 456. Lysine 467 participates in a covalent cross-link: Glycyl lysine isopeptide (Lys-Gly) (interchain with G-Cter in SUMO2). PolyADP-ribosyl glutamic acid is present on residues glutamate 471 and glutamate 484. Lysine 486 participates in a covalent cross-link: Glycyl lysine isopeptide (Lys-Gly) (interchain with G-Cter in SUMO1); alternate. Lysine 486 participates in a covalent cross-link: Glycyl lysine isopeptide (Lys-Gly) (interchain with G-Cter in SUMO2); alternate. PolyADP-ribosyl glutamic acid occurs at positions 488 and 491. The disordered stretch occupies residues proline 495–asparagine 516. Serine 499, serine 503, and serine 506 each carry ADP-ribosylserine. Residue lysine 511 forms a Glycyl lysine isopeptide (Lys-Gly) (interchain with G-Cter in SUMO2) linkage. A polyADP-ribosyl glutamic acid mark is found at glutamate 512 and glutamate 513. ADP-ribosylserine is present on serine 518. The residue at position 519 (glutamate 519) is a PolyADP-ribosyl glutamic acid. At lysine 520 the chain carries N6-(ADP-ribosyl)lysine. Lysine 527 participates in a covalent cross-link: Glycyl lysine isopeptide (Lys-Gly) (interchain with G-Cter in SUMO2). Residues serine 541–phenylalanine 637 form the WGR domain. Threonine 593 is modified (phosphothreonine). Lysine 599 and lysine 620 each carry N6-acetyllysine. Residues lysine 661–arginine 778 enclose the PARP alpha-helical domain. Lysine 747 participates in a covalent cross-link: Glycyl lysine isopeptide (Lys-Gly) (interchain with G-Cter in SUMO1); alternate. Residue lysine 747 forms a Glycyl lysine isopeptide (Lys-Gly) (interchain with G-Cter in SUMO2); alternate linkage. Phosphoserine is present on residues serine 781 and serine 785. The 227-residue stretch at aspartate 787–tryptophan 1013 folds into the PARP catalytic domain. NAD(+)-binding positions include histidine 861 to serine 863, glycine 870, arginine 877, and serine 903. Catalysis depends on glutamate 987, which acts as the For poly [ADP-ribose] polymerase activity.

The protein belongs to the ARTD/PARP family. As to quaternary structure, homodimer; PARP-type zinc-fingers from separate PARP1 molecules form a dimer module that specifically recognizes DNA strand breaks. Heterodimer; heterodimerizes with PARP2. Interacts (via the PARP catalytic domain) with HPF1. Interacts with NMNAT1. Interacts with nucleosomes; with a preference for nucleosomes containing H2A.X. Interacts with APTX. Component of a base excision repair (BER) complex, containing at least XRCC1, PARP1, PARP2, POLB and LRIG3. Interacts with SRY. The SWAP complex consists of NPM1, NCL, PARP1 and SWAP70. Interacts with TIAM2. Interacts with PARP3; leading to activate PARP1 in absence of DNA. Interacts (when poly-ADP-ribosylated) with CHD1L (via macro domain). Interacts with the DNA polymerase alpha catalytic subunit POLA1; this interaction functions as part of the control of replication fork progression. Interacts with EEF1A1 and TXK. Interacts with RNF4. Interacts with RNF146. Interacts with ZNF423. Interacts with APLF. Interacts with SNAI1 (via zinc fingers); the interaction requires SNAI1 to be poly-ADP-ribosylated and non-phosphorylated (active) by GSK3B. Interacts (when poly-ADP-ribosylated) with PARP9. Interacts with NR4A3; activates PARP1 by improving acetylation of PARP1 and suppressing the interaction between PARP1 and SIRT1. Interacts (via catalytic domain) with PUM3; the interaction inhibits the poly-ADP-ribosylation activity of PARP1 and the degradation of PARP1 by CASP3 following genotoxic stress. Interacts with ZNF365. Interacts with RRP1B. Interacts with TIMELESS; the interaction is direct. Interacts with CGAS; leading to impede the formation of the PARP1-TIMELESS complex. Interacts with KHDC3L, the interaction is increased following the formation of DNA double-strand breaks. Interacts (when auto-poly-ADP-ribosylated) with XRCC1; leading to inhibit PARP1 ADP-ribosyltransferase activity. Interacts with SPINDOC; promoting PARP1 ADP-ribosyltransferase activity. Interacts with BANF1; leading to inhibit PARP1 ADP-ribosyltransferase activity in response to oxidative DNA damage. Interacts (when sumoylated and ubiquitinated) with VCP/p97; leading to its extraction from chromatin. Interacts with YARS1; promoting PARP1 ADP-ribosyltransferase activity. Interacts with PACMP micropeptide; Interacts with PACMP micropeptide; interaction. Interacts (when poly-ADP-ribosylated) with isoform 1 of MACROH2A1; MACROH2A1 specifically binds to poly-ADP-ribose chains and inhibits PARP1 activity, limiting the consumption of nuclear NAD(+). Interacts with CARM1; promoting recruitment to replication forks. Interacts with RECQL. Interacts with ZNF32; the interaction reshapes ZNF432 interacting proteins. Interacts with TPRN; TPRN interacts with a number of DNA damage response proteins, is recruited to sites of DNA damage and may play a role in DNA damage repair. In terms of assembly, interacts (when auto-poly-ADP-ribosylated) with AIFM1. Post-translationally, poly-ADP-ribosylated on serine, glutamate and aspartate residues by autocatalysis. Auto-ADP-ribosylation on serine takes place following interaction with HPF1. Auto poly-ADP-ribosylation on serine residues promotes its dissociation from chromatin. Poly-ADP-ribosylated by PARP2; poly-ADP-ribosylation mediates the recruitment of CHD1L to DNA damage sites. Mono-ADP-ribosylated at Lys-520 by SIRT6 in response to oxidative stress, promoting recruitment to double-strand breaks (DSBs) sites. S-nitrosylated, leading to inhibit transcription regulation activity. In terms of processing, phosphorylated at Thr-593 by PRKDC in response to DNA damage following virus infection, promoting its translocation to the cytosol. Phosphorylated by TXK. Post-translationally, proteolytically cleaved by caspase-3 (CASP3) and caspase-7 (CASP7) in response to apoptosis to generate the Poly [ADP-ribose] polymerase 1, processed N-terminus and Poly [ADP-ribose] polymerase 1, processed C-terminus forms. Sumoylated with SUMO1 or SUMO2 by PIAS4 following prolonged residence (trapping) to chromatin. Sumoylation promotes ubiquitination by RNF4 and removal from chromatin by VCP/p97. In terms of processing, ubiquitinated by RNF4 following sumoylation by PIAS4 in response to prolonged residence (trapping) to chromatin. Ubiquitination promotes removal from chromatin by VCP/p97.

Its subcellular location is the chromosome. The protein resides in the nucleus. It localises to the nucleolus. It is found in the cytoplasm. The protein localises to the cytosol. It carries out the reaction NAD(+) + (ADP-D-ribosyl)n-acceptor = nicotinamide + (ADP-D-ribosyl)n+1-acceptor + H(+).. The catalysed reaction is L-seryl-[protein] + NAD(+) = O-(ADP-D-ribosyl)-L-seryl-[protein] + nicotinamide + H(+). The enzyme catalyses L-aspartyl-[protein] + NAD(+) = 4-O-(ADP-D-ribosyl)-L-aspartyl-[protein] + nicotinamide. It catalyses the reaction L-glutamyl-[protein] + NAD(+) = 5-O-(ADP-D-ribosyl)-L-glutamyl-[protein] + nicotinamide. It carries out the reaction L-tyrosyl-[protein] + NAD(+) = O-(ADP-D-ribosyl)-L-tyrosyl-[protein] + nicotinamide + H(+). The catalysed reaction is L-histidyl-[protein] + NAD(+) = N(tele)-(ADP-D-ribosyl)-L-histidyl-[protein] + nicotinamide + H(+). ADP-ribosyltransferase activity is regulated via an allosteric activation mechanism. In absence of activation signal, PARP1 is autoinhibited by the PARP alpha-helical domain (also named HD region), which prevents effective NAD(+)-binding. Activity is highly stimulated by signals, such as DNA strand breaks. Binding to damaged DNA unfolds the PARP alpha-helical domain, relieving autoinhibition. Poly-ADP-ribosyltransferase activity is tightly regulated and PARP1 is removed from damaged chromatin following initial poly-ADP-ribosylation of chromatin to avoid prolonged residence (trapping) that has cytotoxic consequences. A number of factors (VCP/p97) or post-translational modifications (auto-poly-ADP-ribosylation or ubiquitination) promote PARP1 removal from chromatin. Poly-ADP-ribosyltransferase that mediates poly-ADP-ribosylation of proteins and plays a key role in DNA repair. Mediates glutamate, aspartate, serine, histidine or tyrosine ADP-ribosylation of proteins: the ADP-D-ribosyl group of NAD(+) is transferred to the acceptor carboxyl group of target residues and further ADP-ribosyl groups are transferred to the 2'-position of the terminal adenosine moiety, building up a polymer with an average chain length of 20-30 units. Serine ADP-ribosylation of proteins constitutes the primary form of ADP-ribosylation of proteins in response to DNA damage. Specificity for the different amino acids is conferred by interacting factors, such as HPF1 and NMNAT1. Following interaction with HPF1, catalyzes serine ADP-ribosylation of target proteins; HPF1 confers serine specificity by completing the PARP1 active site. Also catalyzes tyrosine ADP-ribosylation of target proteins following interaction with HPF1. Following interaction with NMNAT1, catalyzes glutamate and aspartate ADP-ribosylation of target proteins; NMNAT1 confers glutamate and aspartate specificity. PARP1 initiates the repair of DNA breaks: recognizes and binds DNA breaks within chromatin and recruits HPF1, licensing serine ADP-ribosylation of target proteins, such as histones (H2BS6ADPr and H3S10ADPr), thereby promoting decompaction of chromatin and the recruitment of repair factors leading to the reparation of DNA strand breaks. HPF1 initiates serine ADP-ribosylation but restricts the polymerase activity of PARP1 in order to limit the length of poly-ADP-ribose chains. In addition to base excision repair (BER) pathway, also involved in double-strand breaks (DSBs) repair: together with TIMELESS, accumulates at DNA damage sites and promotes homologous recombination repair by mediating poly-ADP-ribosylation. Mediates the poly-ADP-ribosylation of a number of proteins, including itself, APLF, CHFR and NFAT5. In addition to proteins, also able to ADP-ribosylate DNA: catalyzes ADP-ribosylation of DNA strand break termini containing terminal phosphates and a 2'-OH group in single- and double-stranded DNA, respectively. Required for PARP9 and DTX3L recruitment to DNA damage sites. PARP1-dependent PARP9-DTX3L-mediated ubiquitination promotes the rapid and specific recruitment of 53BP1/TP53BP1, UIMC1/RAP80, and BRCA1 to DNA damage sites. PARP1-mediated DNA repair in neurons plays a role in sleep: senses DNA damage in neurons and promotes sleep, facilitating efficient DNA repair. In addition to DNA repair, also involved in other processes, such as transcription regulation, programmed cell death, membrane repair, adipogenesis and innate immunity. Acts as a repressor of transcription: binds to nucleosomes and modulates chromatin structure in a manner similar to histone H1, thereby altering RNA polymerase II. Acts both as a positive and negative regulator of transcription elongation, depending on the context. Acts as a positive regulator of transcription elongation by mediating poly-ADP-ribosylation of NELFE, preventing RNA-binding activity of NELFE and relieving transcription pausing. Acts as a negative regulator of transcription elongation in response to DNA damage by catalyzing poly-ADP-ribosylation of CCNT1, disrupting the phase separation activity of CCNT1 and subsequent activation of CDK9. Involved in replication fork progression following interaction with CARM1: mediates poly-ADP-ribosylation at replication forks, slowing fork progression. Poly-ADP-ribose chains generated by PARP1 also play a role in poly-ADP-ribose-dependent cell death, a process named parthanatos. Also acts as a negative regulator of the cGAS-STING pathway. Acts by mediating poly-ADP-ribosylation of CGAS: PARP1 translocates into the cytosol following phosphorylation by PRKDC and catalyzes poly-ADP-ribosylation and inactivation of CGAS. Acts as a negative regulator of adipogenesis: catalyzes poly-ADP-ribosylation of histone H2B on 'Glu-35' (H2BE35ADPr) following interaction with NMNAT1, inhibiting phosphorylation of H2B at 'Ser-36' (H2BS36ph), thereby blocking expression of pro-adipogenetic genes. Involved in the synthesis of ATP in the nucleus, together with NMNAT1, PARG and NUDT5. Nuclear ATP generation is required for extensive chromatin remodeling events that are energy-consuming. In terms of biological role, promotes AIFM1-mediated apoptosis. This form, which translocates into the cytoplasm following cleavage by caspase-3 (CASP3) and caspase-7 (CASP7) in response to apoptosis, is auto-poly-ADP-ribosylated and serves as a poly-ADP-ribose carrier to induce AIFM1-mediated apoptosis. Its function is as follows. This cleavage form irreversibly binds to DNA breaks and interferes with DNA repair, promoting DNA damage-induced apoptosis. This is Poly [ADP-ribose] polymerase 1 (PARP1) from Cricetulus griseus (Chinese hamster).